The following is a 508-amino-acid chain: Phenylacetaldehyde synthase (508 aa).

L-phenylalanine is bound by residues H203 and H318. Residue K319 is modified to N6-(pyridoxal phosphate)lysine. F348 serves as a coordination point for L-phenylalanine.

The protein belongs to the group II decarboxylase family. As to quaternary structure, homotetramer. Pyridoxal 5'-phosphate is required as a cofactor.

The catalysed reaction is L-phenylalanine + O2 + H2O + H(+) = 2-phenylacetaldehyde + H2O2 + NH4(+) + CO2. Functionally, bifunctional enzyme that catalyzes the decarboxylation of L-phenylalanine to produce 2-phenylethylamine, which is then oxidized to form 2-phenylacetaldehyde, a constituent of floral scent in petals. 2-phenylacetaldehyde is a precursor of 2-phenylethanol, another constituent of floral scent in petals. The protein is Phenylacetaldehyde synthase of Rosa hybrid cultivar.